The following is a 64-amino-acid chain: UPF0337 protein SAB0772 (64 aa).

The segment at 1 to 40 (MADESKFEQAKGNVKETIGNVTDNKNLENEGKEDKASGKA) is disordered. The segment covering 25-40 (KNLENEGKEDKASGKA) has biased composition (basic and acidic residues).

Belongs to the UPF0337 (CsbD) family.

The protein is UPF0337 protein SAB0772 of Staphylococcus aureus (strain bovine RF122 / ET3-1).